Reading from the N-terminus, the 380-residue chain is Cytochrome b (380 aa).

Helical transmembrane passes span 34–54 (FGSL…LLAA), 78–99 (WLLR…YLHI), 114–134 (WNTG…GYVL), and 179–199 (FFAL…IHLT). Residues His-84 and His-98 each contribute to the heme b site. Positions 183 and 197 each coordinate heme b. Residue His-202 participates in a ubiquinone binding. Transmembrane regions (helical) follow at residues 227-247 (LKDI…ALFH), 289-309 (LGGV…PFLH), 321-341 (LSQL…WIGS), and 348-368 (FIII…VLFP).

The protein belongs to the cytochrome b family. The cytochrome bc1 complex contains 11 subunits: 3 respiratory subunits (MT-CYB, CYC1 and UQCRFS1), 2 core proteins (UQCRC1 and UQCRC2) and 6 low-molecular weight proteins (UQCRH/QCR6, UQCRB/QCR7, UQCRQ/QCR8, UQCR10/QCR9, UQCR11/QCR10 and a cleavage product of UQCRFS1). This cytochrome bc1 complex then forms a dimer. It depends on heme b as a cofactor.

Its subcellular location is the mitochondrion inner membrane. In terms of biological role, component of the ubiquinol-cytochrome c reductase complex (complex III or cytochrome b-c1 complex) that is part of the mitochondrial respiratory chain. The b-c1 complex mediates electron transfer from ubiquinol to cytochrome c. Contributes to the generation of a proton gradient across the mitochondrial membrane that is then used for ATP synthesis. This chain is Cytochrome b (MT-CYB), found in Trogon curucui (Blue-crowned trogon).